Consider the following 266-residue polypeptide: Gasdermin bGSDM (266 aa).

C3 carries S-palmitoyl cysteine lipidation. Beta stranded transmembrane passes span 69–85 (ISGQRTGDLSVGVGLSI), 97–115 (KLGLDTKYQNAKTTMFEFQ), 163–180 (KFTIEAKKSDGTALELTI), and 189–205 (GNVKVSGAASVTSKICY).

This sequence belongs to the bacterial gasdermin family. As to quaternary structure, monomer. Forms large, homooligomeric ring-shaped pores when inserted in membranes. In terms of processing, palmitoylation helps stabilize the inactive state; may self palmitoylate. Palmitoylation plays a significant role in pore formation.

Its subcellular location is the cytoplasm. The protein resides in the cell inner membrane. Its activity is regulated as follows. The full-length protein before cleavage is inactive: intramolecular interactions between the N-terminal domain and the C-terminal region as well as the lipid modification, mediate autoinhibition. The pyroptosis-like-inducing activity is carried by the released N-terminal domain (Gasdermin bGSDM, N-terminus). Its function is as follows. Precursor of a pore-forming protein involved in defense against bacteriophages. Expression of bGSDM and the neighboring protease gene (Ga0182885_104520) is toxic in E.coli. Cleavage of this precursor by its dedicated protease releases the active moiety (gasdermin bGSDM, N-terminus) which inserts into membranes, forming pores and triggering cell death. Pore-forming protein that causes membrane permeabilization via a pyroptosis-like activity. Makes ring-like pores when released. This chain is Gasdermin bGSDM, found in Desulfuromonadales bacterium.